A 76-amino-acid polypeptide reads, in one-letter code: Accessory gland-specific peptide 57Dc (76 aa).

The first 20 residues, 1 to 20, serve as a signal peptide directing secretion; it reads MHGTHFLILLLLCGVLGSNG.

CAMP-dependent phosphorylation. In terms of tissue distribution, lumen fluid of male accessory glands, becomes seminal fluid.

The protein localises to the secreted. Its function is as follows. Transferred from male to female during mating and may affect egglaying and behavior after mating. The sequence is that of Accessory gland-specific peptide 57Dc (Mst57Dc) from Drosophila melanogaster (Fruit fly).